Consider the following 386-residue polypeptide: Phosphoglycerate kinase (386 aa).

Substrate contacts are provided by residues 21–23 (DLN), R36, 59–62 (HLGR), R112, and R145. Residues K196, E313, and 339 to 342 (GGDT) each bind ATP.

This sequence belongs to the phosphoglycerate kinase family. As to quaternary structure, monomer.

It localises to the cytoplasm. It catalyses the reaction (2R)-3-phosphoglycerate + ATP = (2R)-3-phospho-glyceroyl phosphate + ADP. It functions in the pathway carbohydrate degradation; glycolysis; pyruvate from D-glyceraldehyde 3-phosphate: step 2/5. This is Phosphoglycerate kinase from Haemophilus influenzae (strain 86-028NP).